A 173-amino-acid polypeptide reads, in one-letter code: RxLR effector protein PITG_10232 (173 aa).

The signal sequence occupies residues 1-24 (MRLGYLIVGCAVALLATTDGVVDA). Residues 25–64 (SSKHKQLSTDVPRPADDISSERFLRSQDTPEDDGNPAHED) form a disordered region. Basic and acidic residues predominate over residues 37–49 (RPADDISSERFLR). Residues 46 to 65 (RFLRSQDTPEDDGNPAHEDR) carry the RxLR-dEER motif.

Belongs to the RxLR effector family.

It is found in the secreted. The protein resides in the host nucleus. It localises to the host cytoplasm. Effector that leads to host programmed cell death. The sequence is that of RxLR effector protein PITG_10232 from Phytophthora infestans (strain T30-4) (Potato late blight agent).